Reading from the N-terminus, the 89-residue chain is Small ribosomal subunit protein uS15 (89 aa).

This sequence belongs to the universal ribosomal protein uS15 family. In terms of assembly, part of the 30S ribosomal subunit. Forms a bridge to the 50S subunit in the 70S ribosome, contacting the 23S rRNA.

Its function is as follows. One of the primary rRNA binding proteins, it binds directly to 16S rRNA where it helps nucleate assembly of the platform of the 30S subunit by binding and bridging several RNA helices of the 16S rRNA. In terms of biological role, forms an intersubunit bridge (bridge B4) with the 23S rRNA of the 50S subunit in the ribosome. The chain is Small ribosomal subunit protein uS15 from Erwinia tasmaniensis (strain DSM 17950 / CFBP 7177 / CIP 109463 / NCPPB 4357 / Et1/99).